Consider the following 359-residue polypeptide: Isopentenyl-diphosphate delta-isomerase (359 aa).

A substrate-binding site is contributed by 12–13; that stretch reads RK. Residues Ser-68, 69-71, Ser-99, and Asn-128 each bind FMN; that span reads AMT. Residue 99–101 participates in substrate binding; sequence SQR. A substrate-binding site is contributed by Gln-162. Position 163 (Glu-163) interacts with Mg(2+). Residues Lys-194, Thr-224, 277 to 279, and 298 to 299 each bind FMN; these read GIR and AL.

This sequence belongs to the IPP isomerase type 2 family. As to quaternary structure, homooctamer. Dimer of tetramers. FMN is required as a cofactor. The cofactor is NADPH. Mg(2+) serves as cofactor.

Its subcellular location is the cytoplasm. It catalyses the reaction isopentenyl diphosphate = dimethylallyl diphosphate. Its function is as follows. Involved in the biosynthesis of isoprenoids. Catalyzes the 1,3-allylic rearrangement of the homoallylic substrate isopentenyl (IPP) to its allylic isomer, dimethylallyl diphosphate (DMAPP). The sequence is that of Isopentenyl-diphosphate delta-isomerase from Methanoregula boonei (strain DSM 21154 / JCM 14090 / 6A8).